Here is a 266-residue protein sequence, read N- to C-terminus: Phosphatidylglycerol--prolipoprotein diacylglyceryl transferase (266 aa).

The next 4 helical transmembrane spans lie at 14–34 (FGPLQIHWYGLMYLAGFAFFW), 55–75 (FLFYGALGVILGGRIGYILFY), 91–111 (WKGGMAFHGGLIGVMVAMWLF), and 117–137 (VSMFVVADFVAPMVPVGLFFG). Arg138 contributes to the a 1,2-diacyl-sn-glycero-3-phospho-(1'-sn-glycerol) binding site. 3 consecutive transmembrane segments (helical) span residues 172-192 (YPTQLLEALLEGIVLFIILMF), 201-221 (GAASGLFIGLYGLFRFYVEFF), and 235-255 (WVTMGQLLSLPMILIGFALVV).

It belongs to the Lgt family.

It localises to the cell inner membrane. The enzyme catalyses L-cysteinyl-[prolipoprotein] + a 1,2-diacyl-sn-glycero-3-phospho-(1'-sn-glycerol) = an S-1,2-diacyl-sn-glyceryl-L-cysteinyl-[prolipoprotein] + sn-glycerol 1-phosphate + H(+). It participates in protein modification; lipoprotein biosynthesis (diacylglyceryl transfer). Its function is as follows. Catalyzes the transfer of the diacylglyceryl group from phosphatidylglycerol to the sulfhydryl group of the N-terminal cysteine of a prolipoprotein, the first step in the formation of mature lipoproteins. This Hydrogenovibrio crunogenus (strain DSM 25203 / XCL-2) (Thiomicrospira crunogena) protein is Phosphatidylglycerol--prolipoprotein diacylglyceryl transferase.